Here is a 256-residue protein sequence, read N- to C-terminus: MAPFTKSVTEVQVESVIFPPEVKPPGSSKTLFLGGAGVRGIEIQGKFIKFTAIGVYLEDNAVPSLAVKWKGKSAQELTESVEFFRDIVTGPMEKFTRVTTILPLTGQQYSEKVSENCVAAWKSLGIYSDAEAKAIEKFIEIFKDQTFPPAASNLFTQSPLGSLTMSFSKDGSIPEVGNAVLENKLLSEAVLESIIGKHGVSPEAKQNLATRLVQLLNENSTTDLNESENEKLNSNEVSKEEKPLQVEKSAFKEVEV.

T51, N116, and S193 together coordinate substrate. Residues 219-256 (NSTTDLNESENEKLNSNEVSKEEKPLQVEKSAFKEVEV) form a disordered region. Over residues 228-256 (ENEKLNSNEVSKEEKPLQVEKSAFKEVEV) the composition is skewed to basic and acidic residues.

Belongs to the chalcone isomerase family. Nodules.

The catalysed reaction is a chalcone = a flavanone.. Its pathway is secondary metabolite biosynthesis; flavonoid biosynthesis. Catalyzes the intramolecular cyclization of bicyclic chalcones into tricyclic (S)-flavanones. Responsible for the isomerization of 4,2',4',6'-tetrahydroxychalcone (also termed chalcone) into naringenin. The protein is Chalcone--flavanone isomerase (CHI) of Elaeagnus umbellata (Autumn olive).